Here is a 292-residue protein sequence, read N- to C-terminus: Probable ABC transporter permease protein YurN (292 aa).

6 helical membrane passes run 7-27 (IIPY…YIPI), 70-90 (VLYA…LAAV), 106-126 (VFFL…DFIY), 160-180 (VIFV…IVSI), 215-235 (FVAV…PYIL), and 260-280 (MMGY…ALSL). The ABC transmembrane type-1 domain maps to 66–282 (LTNNVLYAVI…IITLALSLMQ (217 aa)).

It belongs to the binding-protein-dependent transport system permease family. MalFG subfamily.

The protein resides in the cell membrane. Probably part of the binding-protein-dependent transport system YurMNO. Probably responsible for the translocation of the substrate across the membrane. This is Probable ABC transporter permease protein YurN (yurN) from Bacillus subtilis (strain 168).